Here is a 214-residue protein sequence, read N- to C-terminus: Adenylate kinase (214 aa).

ATP is bound at residue 10–15; that stretch reads GAGKGT. Residues 30–59 form an NMP region; it reads STGDMLRAAIKEGTPLGLEAKKVMDAGQLI. AMP is bound by residues Thr31, Arg36, 57–59, 85–88, and Gln92; these read QLI and GFPR. The tract at residues 122 to 159 is LID; it reads GRRVHPGSGRVYHVVYNPPKVADKDNETGEELIIRADD. Residues Arg123 and 132–133 each bind ATP; that span reads VY. AMP-binding residues include Arg156 and Arg167. ATP is bound at residue Gln200.

This sequence belongs to the adenylate kinase family. As to quaternary structure, monomer.

It is found in the cytoplasm. It carries out the reaction AMP + ATP = 2 ADP. It functions in the pathway purine metabolism; AMP biosynthesis via salvage pathway; AMP from ADP: step 1/1. Catalyzes the reversible transfer of the terminal phosphate group between ATP and AMP. Plays an important role in cellular energy homeostasis and in adenine nucleotide metabolism. The polypeptide is Adenylate kinase (Pseudoalteromonas translucida (strain TAC 125)).